A 302-amino-acid polypeptide reads, in one-letter code: Methionyl-tRNA formyltransferase (302 aa).

Residue 106-109 (SVLP) coordinates (6S)-5,6,7,8-tetrahydrofolate.

The protein belongs to the Fmt family.

It carries out the reaction L-methionyl-tRNA(fMet) + (6R)-10-formyltetrahydrofolate = N-formyl-L-methionyl-tRNA(fMet) + (6S)-5,6,7,8-tetrahydrofolate + H(+). Its function is as follows. Attaches a formyl group to the free amino group of methionyl-tRNA(fMet). The formyl group appears to play a dual role in the initiator identity of N-formylmethionyl-tRNA by promoting its recognition by IF2 and preventing the misappropriation of this tRNA by the elongation apparatus. In Hydrogenobaculum sp. (strain Y04AAS1), this protein is Methionyl-tRNA formyltransferase.